A 75-amino-acid polypeptide reads, in one-letter code: RYVFEECPGVMGNRAVHGKVTRVCEDCYNVFRDTDVLAGCRKGCFSSEMFKLCLLAMERVEEFPDFKRWIGILNA.

Cystine bridges form between cysteine 7/cysteine 44, cysteine 24/cysteine 40, and cysteine 27/cysteine 53. Position 75 is an alanine amide (alanine 75).

The protein belongs to the arthropod CHH/MIH/GIH/VIH hormone family.

The protein resides in the secreted. Its function is as follows. Inhibits Y-organs where molting hormone (ecdysteroid) is secreted. A molting cycle is initiated when MIH secretion diminishes or stops. The chain is Molt-inhibiting hormone from Procambarus clarkii (Red swamp crayfish).